The sequence spans 196 residues: DnaA initiator-associating protein DiaA (196 aa).

An SIS domain is found at 34 to 196; that stretch reads VVQSLLNGNK…DNTLFPHQEV (163 aa).

Belongs to the SIS family. DiaA subfamily. As to quaternary structure, homotetramer; dimer of dimers.

In terms of biological role, required for the timely initiation of chromosomal replication via direct interactions with the DnaA initiator protein. The protein is DnaA initiator-associating protein DiaA of Erwinia tasmaniensis (strain DSM 17950 / CFBP 7177 / CIP 109463 / NCPPB 4357 / Et1/99).